A 34-amino-acid polypeptide reads, in one-letter code: Photosystem II reaction center protein M (34 aa).

Residues 5–25 (ILAFSATALLILFPTALLLIL) form a helical membrane-spanning segment.

It belongs to the PsbM family. In terms of assembly, PSII is composed of 1 copy each of membrane proteins PsbA, PsbB, PsbC, PsbD, PsbE, PsbF, PsbH, PsbI, PsbJ, PsbK, PsbL, PsbM, PsbT, PsbX, PsbY, PsbZ, Psb30/Ycf12, at least 3 peripheral proteins of the oxygen-evolving complex and a large number of cofactors. It forms dimeric complexes.

It is found in the plastid membrane. Functionally, one of the components of the core complex of photosystem II (PSII). PSII is a light-driven water:plastoquinone oxidoreductase that uses light energy to abstract electrons from H(2)O, generating O(2) and a proton gradient subsequently used for ATP formation. It consists of a core antenna complex that captures photons, and an electron transfer chain that converts photonic excitation into a charge separation. This subunit is found at the monomer-monomer interface. The polypeptide is Photosystem II reaction center protein M (Cuscuta gronovii (Common dodder)).